Consider the following 268-residue polypeptide: Adenosylcobinamide-GDP ribazoletransferase (268 aa).

The next 6 membrane-spanning stretches (helical) occupy residues Ile-54–Trp-74, Ala-80–Ser-100, Ile-124–Ala-144, Trp-150–Val-170, Ala-202–Val-222, and Gly-243–Met-263.

The protein belongs to the CobS family. Requires Mg(2+) as cofactor.

It is found in the cell membrane. The enzyme catalyses alpha-ribazole + adenosylcob(III)inamide-GDP = adenosylcob(III)alamin + GMP + H(+). It catalyses the reaction alpha-ribazole 5'-phosphate + adenosylcob(III)inamide-GDP = adenosylcob(III)alamin 5'-phosphate + GMP + H(+). It functions in the pathway cofactor biosynthesis; adenosylcobalamin biosynthesis; adenosylcobalamin from cob(II)yrinate a,c-diamide: step 7/7. Joins adenosylcobinamide-GDP and alpha-ribazole to generate adenosylcobalamin (Ado-cobalamin). Also synthesizes adenosylcobalamin 5'-phosphate from adenosylcobinamide-GDP and alpha-ribazole 5'-phosphate. The chain is Adenosylcobinamide-GDP ribazoletransferase from Roseiflexus sp. (strain RS-1).